A 192-amino-acid chain; its full sequence is Peptidyl-tRNA hydrolase (192 aa).

Position 17 (histidine 17) interacts with tRNA. The active-site Proton acceptor is histidine 22. The tRNA site is built by phenylalanine 68, asparagine 70, and asparagine 116.

This sequence belongs to the PTH family. Monomer.

The protein resides in the cytoplasm. The enzyme catalyses an N-acyl-L-alpha-aminoacyl-tRNA + H2O = an N-acyl-L-amino acid + a tRNA + H(+). Its function is as follows. Hydrolyzes ribosome-free peptidyl-tRNAs (with 1 or more amino acids incorporated), which drop off the ribosome during protein synthesis, or as a result of ribosome stalling. Catalyzes the release of premature peptidyl moieties from peptidyl-tRNA molecules trapped in stalled 50S ribosomal subunits, and thus maintains levels of free tRNAs and 50S ribosomes. The protein is Peptidyl-tRNA hydrolase of Stenotrophomonas maltophilia (strain K279a).